The primary structure comprises 110 residues: UPF0060 membrane protein Pcryo_1341 (110 aa).

4 helical membrane-spanning segments follow: residues 7 to 27, 33 to 53, 63 to 83, and 87 to 107; these read VGLF…PYLW, SIWL…LLTL, AAYG…VDGI, and TWDI…MFAP.

It belongs to the UPF0060 family.

The protein localises to the cell inner membrane. The chain is UPF0060 membrane protein Pcryo_1341 from Psychrobacter cryohalolentis (strain ATCC BAA-1226 / DSM 17306 / VKM B-2378 / K5).